The chain runs to 163 residues: uncharacterized protein (163 aa).

The helical transmembrane segment at 11–31 (LSWFLLLVVVILIFFLLLSCL) threads the bilayer.

It localises to the membrane. This is an uncharacterized protein from Saccharomyces cerevisiae (strain ATCC 204508 / S288c) (Baker's yeast).